The sequence spans 404 residues: Probable tRNA sulfurtransferase (404 aa).

In terms of domain architecture, THUMP spans 60–165; sequence QPIVEALKLV…DEAAYISYEE (106 aa). ATP-binding positions include 183–184, 208–209, R265, G287, and Q296; these read ML and HF.

This sequence belongs to the ThiI family.

The protein resides in the cytoplasm. The catalysed reaction is [ThiI sulfur-carrier protein]-S-sulfanyl-L-cysteine + a uridine in tRNA + 2 reduced [2Fe-2S]-[ferredoxin] + ATP + H(+) = [ThiI sulfur-carrier protein]-L-cysteine + a 4-thiouridine in tRNA + 2 oxidized [2Fe-2S]-[ferredoxin] + AMP + diphosphate. The enzyme catalyses [ThiS sulfur-carrier protein]-C-terminal Gly-Gly-AMP + S-sulfanyl-L-cysteinyl-[cysteine desulfurase] + AH2 = [ThiS sulfur-carrier protein]-C-terminal-Gly-aminoethanethioate + L-cysteinyl-[cysteine desulfurase] + A + AMP + 2 H(+). It participates in cofactor biosynthesis; thiamine diphosphate biosynthesis. Its function is as follows. Catalyzes the ATP-dependent transfer of a sulfur to tRNA to produce 4-thiouridine in position 8 of tRNAs, which functions as a near-UV photosensor. Also catalyzes the transfer of sulfur to the sulfur carrier protein ThiS, forming ThiS-thiocarboxylate. This is a step in the synthesis of thiazole, in the thiamine biosynthesis pathway. The sulfur is donated as persulfide by IscS. This chain is Probable tRNA sulfurtransferase, found in Streptococcus pyogenes serotype M49 (strain NZ131).